We begin with the raw amino-acid sequence, 147 residues long: uncharacterized protein (147 aa).

2 helical membrane-spanning segments follow: residues 41 to 61 (LANF…ALLI) and 67 to 87 (LLAA…SFPL).

It is found in the cell membrane. This is an uncharacterized protein from Pyrococcus horikoshii (strain ATCC 700860 / DSM 12428 / JCM 9974 / NBRC 100139 / OT-3).